Consider the following 474-residue polypeptide: Sugar transporter ERD6-like 17 (474 aa).

12 consecutive transmembrane segments (helical) span residues 27–47, 76–96, 106–126, 129–149, 159–180, 184–204, 266–286, 302–322, 329–349, 363–383, 403–423, and 429–449; these read ITAC…SFGV, FATL…MVIG, FLCI…LLNF, IISG…IAEI, TFSN…GNFI, TLAL…FFVP, TLVV…AAVI, IGTT…LILV, PLLM…GVAF, ILSF…LGGL, IVTL…NFLF, and GTFF…WLLV.

This sequence belongs to the major facilitator superfamily. Sugar transporter (TC 2.A.1.1) family. Expressed in young seedlings.

It localises to the membrane. Its function is as follows. Sugar transporter. This chain is Sugar transporter ERD6-like 17, found in Arabidopsis thaliana (Mouse-ear cress).